The sequence spans 158 residues: C-type lectin BiL (158 aa).

A signal peptide spans 1–23 (MGRFIFVSFGLLVVFLSLSGAKG). 4 cysteine pairs are disulfide-bonded: C26/C37, C54/C154, C61/C156, and C129/C146. Residues 33-155 (MNGLCYKIFD…CESKNAFLCQ (123 aa)) enclose the C-type lectin domain. Residues Q119, D121, E127, N142, and D143 each coordinate Ca(2+). A Galactose-binding motif is present at residues 119–121 (QPD).

In terms of assembly, homodimer; disulfide-linked. In terms of tissue distribution, expressed by the venom gland.

The protein resides in the secreted. Lectin with a hemagglutinating activity that is inhibited by galactose, lactose and EDTA. Is calcium-dependent. Shows effects on the renal function of isolated perfused rat kidneys by increasing both perfusion pressure (PP) and renal vascular resistance (RVR). In addition, the urinary flow and glomerular filtration rate (GFR) decreases significantly. The changes observed may reflect direct injury to the glomerular and tubular renal cells, and the rise in permeability in the glomerular endothelial cells, may be the effect of interactions of C-type lectin with endothelial cells or due to release of other mediators by mesangial, tubular and endothelial cells. The protein is C-type lectin BiL of Bothrops insularis (Golden lancehead).